Reading from the N-terminus, the 367-residue chain is Folliculin-like protein bhd1 (367 aa).

Disordered stretches follow at residues 41–75 (RSIGVTENGNDSPEAFKNELDNRNNADSQSLQSST) and 92–115 (SKGPESPRVNSFHNSYSRNQSPIS). The span at 54 to 64 (EAFKNELDNRN) shows a compositional bias: basic and acidic residues. 2 stretches are compositionally biased toward polar residues: residues 65-75 (NADSQSLQSST) and 99-115 (RVNSFHNSYSRNQSPIS). Positions 131–302 (FSVPDVQPRL…SNIGTAPSYE (172 aa)) constitute a uDENN FLCN/SMCR8-type domain.

The protein belongs to the folliculin family.

Its subcellular location is the nucleus. The protein resides in the cytoplasm. This is Folliculin-like protein bhd1 (bhd1) from Schizosaccharomyces pombe (strain 972 / ATCC 24843) (Fission yeast).